Reading from the N-terminus, the 454-residue chain is MTDRTCLSIVLAAGEGTRMKSNLPKVLHRVAGLPLVCHVVNAVRGTGKSDVALVVGRGAEDVRSAVEKIAGPVSAFEQKERLGTAHAVLAAHEAIARGYDDLLIVFGDTPLIEAQSLLAARERLAQGADLVVIGFRPASPHGYGRLIEEGGQLVAIIEEKEATDEQKKIGFCNGGLMALRGQHALALLDAVGNDNAKGEYYLTDIVAIAHGKGLNVTAIEVPVDNVIGINNRAELAEAETIWQNRKRRELMLSGVTLIAPETVFFSYDTVIEPDVVIEPNVFFGPSVHVASGALIHSFSHLEGAQVGEKAEIGPFARLRPGADLAEKSKVGNFCEVKNAKVGKGAKINHLAYIGDAVIGASSNIGAGTITCNYDGYNKFKTIIGDNAFIGSNSSLVAPVEIGDNAYIASGSVITADVPADALALGRARQETKEGRAKILREKYAAIKAAKSVSK.

The pyrophosphorylase stretch occupies residues 1–232; that stretch reads MTDRTCLSIV…VDNVIGINNR (232 aa). UDP-N-acetyl-alpha-D-glucosamine contacts are provided by residues 11–14, Lys-25, Gln-78, and 83–84; these read LAAG and GT. Residue Asp-108 coordinates Mg(2+). Residues Gly-144, Glu-158, Asn-173, and Asn-230 each coordinate UDP-N-acetyl-alpha-D-glucosamine. Mg(2+) is bound at residue Asn-230. The interval 233–253 is linker; the sequence is AELAEAETIWQNRKRRELMLS. The segment at 254–454 is N-acetyltransferase; that stretch reads GVTLIAPETV…AIKAAKSVSK (201 aa). UDP-N-acetyl-alpha-D-glucosamine contacts are provided by Arg-319 and Lys-337. The active-site Proton acceptor is the His-349. UDP-N-acetyl-alpha-D-glucosamine is bound by residues Tyr-352 and Asn-363. Residues Ala-366, 372–373, Ser-391, Ser-409, and Arg-426 each bind acetyl-CoA; that span reads NY.

This sequence in the N-terminal section; belongs to the N-acetylglucosamine-1-phosphate uridyltransferase family. It in the C-terminal section; belongs to the transferase hexapeptide repeat family. In terms of assembly, homotrimer. Requires Mg(2+) as cofactor.

It is found in the cytoplasm. It carries out the reaction alpha-D-glucosamine 1-phosphate + acetyl-CoA = N-acetyl-alpha-D-glucosamine 1-phosphate + CoA + H(+). It catalyses the reaction N-acetyl-alpha-D-glucosamine 1-phosphate + UTP + H(+) = UDP-N-acetyl-alpha-D-glucosamine + diphosphate. Its pathway is nucleotide-sugar biosynthesis; UDP-N-acetyl-alpha-D-glucosamine biosynthesis; N-acetyl-alpha-D-glucosamine 1-phosphate from alpha-D-glucosamine 6-phosphate (route II): step 2/2. The protein operates within nucleotide-sugar biosynthesis; UDP-N-acetyl-alpha-D-glucosamine biosynthesis; UDP-N-acetyl-alpha-D-glucosamine from N-acetyl-alpha-D-glucosamine 1-phosphate: step 1/1. It functions in the pathway bacterial outer membrane biogenesis; LPS lipid A biosynthesis. In terms of biological role, catalyzes the last two sequential reactions in the de novo biosynthetic pathway for UDP-N-acetylglucosamine (UDP-GlcNAc). The C-terminal domain catalyzes the transfer of acetyl group from acetyl coenzyme A to glucosamine-1-phosphate (GlcN-1-P) to produce N-acetylglucosamine-1-phosphate (GlcNAc-1-P), which is converted into UDP-GlcNAc by the transfer of uridine 5-monophosphate (from uridine 5-triphosphate), a reaction catalyzed by the N-terminal domain. This chain is Bifunctional protein GlmU, found in Brucella abortus (strain S19).